The primary structure comprises 2582 residues: MADPIMDLFDDPNLFGLDSLTDDSFNQVTQDPIEEALGLPSSLDSLDQMNQDGGGGDVGNSSASDLVPPPEETASTELPKESTAPAPESLTLHDYTTQPTSQEQPAQPVLQTSTPTAGLLQVSKSQEILSQGNPFMGVSATGVSPSNTGGQPSQSAPKIVILKAPPNSSVTGTHVAQIQAQGITSTAQPLVAGTANGGKVTFTKVLTGTPLRPGVSIVSGNTVLATKVPGNQAAVQRIVQPSRPVKQLVLQPVKGSAPAGNPGAAGPPLKPAVTLTSTPTQGESKRITLVLQQPQSGGPQGHRHVVLGSLPGKIVLQGNQLAALTQAKNAQGQPAKVVTIQLQVQQPQQKIQIVPQPPSSQPQPQPQPPPSAQPLTLSSVQQAQIMGPGQNPGQRLSVPLKMVLQPQAGSSQGASSGLSVVKVLSASEVAALSSPASCAPHTAGKTGMEENRRLEHQKKQEKANRIVAEAIARARARGEQNIPRVLNEDELPSVRPEEEGEKKRRKKSSGERLKEEKPKKSKTAAASKTKGKSKLNTITPVVGKKRKRNTSSDNSDVEVMPAQSPREDEESSIQKRRSNRQVKRKKYTEDLDIKITDDEEEEEVDVTGPIKPEPILPEPVQEPDGETLPSMQFFVENPSEEDAAIVDKVLSMRVVKKELPSGQYTEAEEFFVKYKNYSYLHCEWATISQLEKDKRIHQKLKRFKTKMAQMRHFFHEDEEPFNPDYVEVDRILDESHSVDKDNGEPVIYYLVKWCSLPYEDSTWELKEDVDEGKIREFKRIQSRHPELRRVNRPQANAWKKLELSHEYKNRNQLREYQLEGVNWLLFNWYNRQNCILADEMGLGKTIQSIAFLQEVYNVGIHGPFLVIAPLSTITNWEREFNTWTEMNTIVYHGSLASRQMIQQYEMYCKDSRGRLIPGAYKFDALITTFEMILSDCPELREIEWRCVIIDEAHRLKNRNCKLLDSLKHMDLEHKVLLTGTPLQNTVEELFSLLHFLEPSQFPSESEFLKDFGDLKTEEQVQKLQAILKPMMLRRLKEDVEKNLAPKQETIIEVELTNIQKKYYRAILEKNFSFLSKGAGHTNMPNLLNTMMELRKCCNHPYLINGAEEKILMEFREACHIIPQDFHLQAMVRSAGKLVLIDKLLPKLKAGGHKVLIFSQMVRCLDILEDYLIQRRYLYERIDGRVRGNLRQAAIDRFSKPDSDRFVFLLCTRAGGLGINLTAADTCIIFDSDWNPQNDLQAQARCHRIGQSKAVKVYRLITRNSYEREMFDKASLKLGLDKAVLQSMSGRDGNITGIQQFSKKEIEDLLRKGAYAAIMEEDDEGSKFCEEDIDQILLRRTTTITIESEGKGSTFAKASFVASENRTDISLDDPNFWQKWAKKADLDMDLLNSKNNLVIDTPRVRKQTRHFSTLKDDDLVEFSDLESEDDERPRSRRHDRHHTYGRTDCFRVEKHLLVYGWGRWRDILSHGRFKRRMTERDVETICRAILVYCLLHYRGDENIKSFIWDLISPAENGKTKELQNHSGLSIPVPRGRKGKKVKSQSTFDIHKADWIRKYNPDTLFQDESYKKHLKHQCNKVLLRVRMLYYLRQEVIGDQAEKVLGGAIASEIDIWFPVVDQLEVPTTWWDSEADKSLLIGVFKHGYEKYNTMRADPALCFLEKAGRPDDKAIAAEHRVLDNFSDLVEGIDFDKDCEDPEYKPLQGPPKDPDDEGDPLMMMDEEISVIDGEEAQVTQQPGHLFWPPGSALTARLRRLVTAYQRSYKREQMKMEAAERGDRRRRRCEAAFKLKEIARREKQQRWTRREQTDFYRVVSTFGVEYDPDNMQFHWDRFRTFARLDKKTDESLTKYFHGFVAMCRQVCRLPPAAGDEPPDPNLFIEPITEERASRTLYRIELLRRLREQVLCHPLLEDRLALCQPPGLELPKWWEPVRHDGELLRGAARHGVSQTDCNIMQDPDFSFLAARMNYMQNHQAGASAASLSRCSTPLLHQQCTSRTASPSPLRPDAPVEKSPEESTVQVPNLESLTLKLEDEVVARSRLTSQDYEVRVGSSDTAPLSRSVPPVKLEDEDDSDSELDLSKLSPSSSSSSSSSSSSSSTDESEDEKEEKLTADRSRPKLYDEESLLSLTMSQDGFPNEDGEQMTPELLLLQERQRASEWPKDRVLINRIDLVCQAVLSGKWPSNRRSQEVTAGGILGPGNHLLDSPSLTPGEDGDSPVPTPRSGSAASMAEEEASAVTTAAAQFTKLRRGMDEKEFTVQIKDEEGLKLTFQKHRLMANGVMGDGHPLFHKKKGNRKKLVELEVECMEEPNHLDLDLETRIPVINKVDGTLLVGDEAPRRAELEMWLQGHPEFAVDPRFLAYMEERRKQKWQRCKKNNKAELNCLGMEPVQPANSRNGKKGHYAETAFNRVLPGPVAPENSKKRVRRTRPDLSKMMALMQGGSTGSLSLHNTFQHSSSNLQSVSSLGHSSTTSASLPFMPFVMGAAAPPHVDSSTMLHHHHHHPHPHHHHHHHPGLRTTGYPSSPATTTSGTALRLPTLQPEDDDEEEDEEDDDLSQGYDSSERDFSLIDDPMMPANSDSSEDADD.

4 disordered regions span residues 22-111, 136-155, 253-283, and 349-377; these read DDSF…PVLQ, MGVSATGVSPSNTGGQPSQS, VKGSAPAGNPGAAGPPLKPAVTLTSTPTQGE, and QKIQIVPQPPSSQPQPQPQPPPSAQPLTL. 3 stretches are compositionally biased toward polar residues: residues 42 to 51, 94 to 111, and 141 to 155; these read SLDSLDQMNQ, DYTTQPTSQEQPAQPVLQ, and TGVSPSNTGGQPSQS. Residues 255-267 show a composition bias toward low complexity; sequence GSAPAGNPGAAGP. Residues 355-372 show a composition bias toward pro residues; that stretch reads PQPPSSQPQPQPQPPPSA. Residue Ser434 is modified to Phosphoserine. Disordered regions lie at residues 475–585 and 598–617; these read RARG…VKRK and DEEEEEVDVTGPIKPEPILP. The span at 495–518 shows a compositional bias: basic and acidic residues; the sequence is RPEEEGEKKRRKKSSGERLKEEKP. Ser555 and Ser564 each carry phosphoserine. Over residues 574–585 the composition is skewed to basic residues; the sequence is QKRRSNRQVKRK. A Glycyl lysine isopeptide (Lys-Gly) (interchain with G-Cter in SUMO) cross-link involves residue Lys611. 2 Chromo domains span residues 644-711 and 726-792; these read AIVD…AQMR and VEVD…RVNR. A Helicase ATP-binding domain is found at 825-999; sequence LFNWYNRQNC…FSLLHFLEPS (175 aa). Residue 838–845 participates in ATP binding; that stretch reads DEMGLGKT. A DEAH box motif is present at residues 950-953; sequence DEAH. The 152-residue stretch at 1139-1290 folds into the Helicase C-terminal domain; sequence LIDKLLPKLK…KAVLQSMSGR (152 aa). A phosphoserine mark is found at Ser1422 and Ser1426. A disordered region spans residues 1694-1715; that stretch reads EDPEYKPLQGPPKDPDDEGDPL. Residues 1791–2304 are interaction with FAM124B; sequence IARREKQQRW…LVELEVECME (514 aa). A phosphoserine mark is found at Ser1978 and Ser1980. The segment at 1990 to 2019 is disordered; sequence QCTSRTASPSPLRPDAPVEKSPEESTVQVP. At Thr1995 the chain carries Phosphothreonine. A phosphoserine mark is found at Ser1997, Ser1999, and Ser2010. A Glycyl lysine isopeptide (Lys-Gly) (interchain with G-Cter in SUMO2) cross-link involves residue Lys2027. Ser2040, Ser2070, and Ser2072 each carry phosphoserine. The interval 2045–2120 is disordered; it reads VRVGSSDTAP…RSRPKLYDEE (76 aa). Over residues 2065 to 2074 the composition is skewed to acidic residues; the sequence is EDEDDSDSEL. A compositionally biased stretch (low complexity) spans 2077–2096; that stretch reads SKLSPSSSSSSSSSSSSSST. Positions 2104 to 2118 are enriched in basic and acidic residues; the sequence is EEKLTADRSRPKLYD. Residues Ser2184, Ser2202, and Ser2204 each carry the phosphoserine modification. Residues 2187 to 2233 are disordered; that stretch reads VTAGGILGPGNHLLDSPSLTPGEDGDSPVPTPRSGSAASMAEEEASA. The residue at position 2206 (Thr2206) is a Phosphothreonine. Ser2213 bears the Phosphoserine mark. Residue Thr2217 is modified to Phosphothreonine. Residues 2222–2233 show a composition bias toward low complexity; the sequence is SAASMAEEEASA. The residue at position 2225 (Ser2225) is a Phosphoserine. Lys2258 is covalently cross-linked (Glycyl lysine isopeptide (Lys-Gly) (interchain with G-Cter in SUMO2)). Residues 2486-2582 are disordered; sequence HVDSSTMLHH…NSDSSEDADD (97 aa). Positions 2493-2511 are enriched in basic residues; sequence LHHHHHHPHPHHHHHHHPG. Residues 2514–2529 show a composition bias toward low complexity; that stretch reads TTGYPSSPATTTSGTA. Residue Ser2520 is modified to Phosphoserine. The segment covering 2537–2551 has biased composition (acidic residues); sequence PEDDDEEEDEEDDDL.

It belongs to the SNF2/RAD54 helicase family. CHD8 subfamily. As to quaternary structure, interacts with CTNNB1 and PIAS3. Component of some MLL1/MLL complex, at least composed of the core components KMT2A/MLL1, ASH2L, HCFC1/HCF1, WDR5 and RBBP5, as well as the facultative components BACC1, CHD8, E2F6, HSP70, INO80C, KANSL1, LAS1L, MAX, MCRS1, MGA, KAT8/MOF, PELP1, PHF20, PRP31, RING2, RUVB1/TIP49A, RUVB2/TIP49B, SENP3, TAF1, TAF4, TAF6, TAF7, TAF9 and TEX10. Interacts with CHD7. Interacts with FAM124B. Interacts with p53/TP53 and histone H1. Interacts with CTCF. Interacts with TLK2. Interacts with HNRNPL in an RNA-dependent manner. Sumoylated.

It is found in the nucleus. The enzyme catalyses ATP + H2O = ADP + phosphate + H(+). Functionally, ATP-dependent chromatin-remodeling factor, it slides nucleosomes along DNA; nucleosome sliding requires ATP. Acts as a transcription repressor by remodeling chromatin structure and recruiting histone H1 to target genes. Suppresses p53/TP53-mediated apoptosis by recruiting histone H1 and preventing p53/TP53 transactivation activity. Acts as a negative regulator of Wnt signaling pathway by regulating beta-catenin (CTNNB1) activity. Negatively regulates CTNNB1-targeted gene expression by being recruited specifically to the promoter regions of several CTNNB1 responsive genes. Involved in both enhancer blocking and epigenetic remodeling at chromatin boundary via its interaction with CTCF. Acts as a suppressor of STAT3 activity by suppressing the LIF-induced STAT3 transcriptional activity. Also acts as a transcription activator via its interaction with ZNF143 by participating in efficient U6 RNA polymerase III transcription. Regulates alternative splicing of a core group of genes involved in neuronal differentiation, cell cycle and DNA repair. Enables H3K36me3-coupled transcription elongation and co-transcriptional RNA processing likely via interaction with HNRNPL. This is Chromodomain-helicase-DNA-binding protein 8 from Mus musculus (Mouse).